A 244-amino-acid chain; its full sequence is tRNA pseudouridine synthase A (244 aa).

Residue aspartate 52 is the Nucleophile of the active site. Substrate is bound at residue tyrosine 110.

The protein belongs to the tRNA pseudouridine synthase TruA family. In terms of assembly, homodimer.

The catalysed reaction is uridine(38/39/40) in tRNA = pseudouridine(38/39/40) in tRNA. Functionally, formation of pseudouridine at positions 38, 39 and 40 in the anticodon stem and loop of transfer RNAs. The polypeptide is tRNA pseudouridine synthase A (Caldicellulosiruptor saccharolyticus (strain ATCC 43494 / DSM 8903 / Tp8T 6331)).